The sequence spans 395 residues: Tryptophan--tRNA ligase (395 aa).

ATP contacts are provided by residues 8–10 (RPT) and 16–17 (GH). Positions 9–17 (PTGKLHLGH) match the 'HIGH' region motif. Positions 117 to 179 (RLTDLEKEFK…EIEPEILKRL (63 aa)) are insert. Aspartate 204 serves as a coordination point for L-tryptophan. Residues 216-218 (GED), isoleucine 254, and 261-265 (KMSKS) each bind ATP. Positions 261-265 (KMSKS) match the 'KMSKS' region motif.

The protein belongs to the class-I aminoacyl-tRNA synthetase family. Homodimer.

The protein resides in the cytoplasm. It catalyses the reaction tRNA(Trp) + L-tryptophan + ATP = L-tryptophyl-tRNA(Trp) + AMP + diphosphate + H(+). Functionally, catalyzes the attachment of tryptophan to tRNA(Trp). The polypeptide is Tryptophan--tRNA ligase (Aquifex aeolicus (strain VF5)).